Consider the following 1005-residue polypeptide: MSNNKVRIYDLSRDLNLDNRDVLIICEQLNIPVKSHSSTISESEADRIRAAAEKYVPSPSTHSMPPTRPTSHSRPLPPQPGKPQPKVPQTKVPQILELRRHQTPAEPATGSAGSSVAPVSRSPVEPQAGLPKTASPQRPVRPAAPGSNSPSHSESTPVTPPAISKPAVSSSPARTEPLRPAVPPPKAAPSPAAMAGRAEPSQPGPQKPVLKRPKVESPQAEVESAPVATATPAPASPRAELTPPPRRELPQLKAPPRPRSETSEDGARRGEKLVARAPEPPGTETDAIEVLQNVSLPKLAGRGAKRPKTKAEEEDELQEELAAKTPKTATKLKRRPQLKLEDEDDVDFAAEVNVQAVVDVSQSLVRPPKPKAAKSAKPAAVATTRISAPKTGGRKLSRRDRRQQEETQERPTSVVLSGDLTVQELANRLALPTSEIIKTLFFKGIAATINQMLDLETASMVAREMGMEVETPEVESTARKVTEMLEAQDLENLQRRPPVVTIMGHVDHGKTTLLDAIRQTKVAQGEAGGITQHIGAYHVDVEHEDQVQQVVFLDTPGHEAFTAMRARGARVTDIAILVVAADDGVRPQTVEAISHAQAAEVPIVVAINKIDKPTAQPDRVKQELTEYNLVPEEWGGDTIMVPVSAINRENLDTLLEMILLVSEVEDLYANPDRSARGTVIEAHLDKARGPVATLLVQNGTLRVGDILLAGSALGKVRAMIDDRGQRVEAATPSFAVEVLGLGDVPAAGDEFEVFNDEREARAIANERANQQRLSRLQQALSSRRVSLTSLSDQAREGELKELNLILKADVQGSVEAILNALGQIPQNEVQLRVLYAAPGEVTETDVDLAAASNAVVIGFNTTLASGSRASADQTGVDIREYNIIYKLLDDIEGAMEGLLEPELVEEPLGQAQVRAVFPVGKGFVAGCYVQSGKLIRNCKIRVLRSGNLVHSGTLNSLKRIKEDAREVNAGYECGIRLDDFQGWAEGDQIEAYQMVTKRRTLNPNA.

2 disordered regions span residues 54–337 and 368–414; these read KYVP…RRPQ and PKPK…PTSV. Polar residues predominate over residues 58-73; it reads SPSTHSMPPTRPTSHS. A compositionally biased stretch (pro residues) spans 75-86; that stretch reads PLPPQPGKPQPK. Over residues 146–157 the composition is skewed to polar residues; sequence GSNSPSHSESTP. Composition is skewed to low complexity over residues 189–198 and 222–240; these read PSPAAMAGRA and VESA…PRAE. Positions 258–274 are enriched in basic and acidic residues; sequence PRSETSEDGARRGEKLV. Positions 392–401 are enriched in basic residues; sequence GGRKLSRRDR. The 174-residue stretch at 495 to 668 folds into the tr-type G domain; it reads RRPPVVTIMG…LLVSEVEDLY (174 aa). The segment at 504–511 is G1; it reads GHVDHGKT. 504 to 511 serves as a coordination point for GTP; the sequence is GHVDHGKT. Residues 529–533 form a G2 region; the sequence is GITQH. The interval 554–557 is G3; that stretch reads DTPG. Residues 554-558 and 608-611 each bind GTP; these read DTPGH and NKID. The tract at residues 608-611 is G4; that stretch reads NKID. Residues 644-646 form a G5 region; the sequence is SAI.

The protein belongs to the TRAFAC class translation factor GTPase superfamily. Classic translation factor GTPase family. IF-2 subfamily.

It is found in the cytoplasm. In terms of biological role, one of the essential components for the initiation of protein synthesis. Protects formylmethionyl-tRNA from spontaneous hydrolysis and promotes its binding to the 30S ribosomal subunits. Also involved in the hydrolysis of GTP during the formation of the 70S ribosomal complex. In Cyanothece sp. (strain PCC 7425 / ATCC 29141), this protein is Translation initiation factor IF-2.